The primary structure comprises 401 residues: Probable tRNA sulfurtransferase (401 aa).

The region spanning 60–165 (EPIIEKLKTV…QDGTYVTCRD (106 aa)) is the THUMP domain. ATP contacts are provided by residues 183 to 184 (ML), 208 to 209 (HF), Arg-265, Gly-287, and Gln-296.

It belongs to the ThiI family.

The protein localises to the cytoplasm. The enzyme catalyses [ThiI sulfur-carrier protein]-S-sulfanyl-L-cysteine + a uridine in tRNA + 2 reduced [2Fe-2S]-[ferredoxin] + ATP + H(+) = [ThiI sulfur-carrier protein]-L-cysteine + a 4-thiouridine in tRNA + 2 oxidized [2Fe-2S]-[ferredoxin] + AMP + diphosphate. It carries out the reaction [ThiS sulfur-carrier protein]-C-terminal Gly-Gly-AMP + S-sulfanyl-L-cysteinyl-[cysteine desulfurase] + AH2 = [ThiS sulfur-carrier protein]-C-terminal-Gly-aminoethanethioate + L-cysteinyl-[cysteine desulfurase] + A + AMP + 2 H(+). It participates in cofactor biosynthesis; thiamine diphosphate biosynthesis. In terms of biological role, catalyzes the ATP-dependent transfer of a sulfur to tRNA to produce 4-thiouridine in position 8 of tRNAs, which functions as a near-UV photosensor. Also catalyzes the transfer of sulfur to the sulfur carrier protein ThiS, forming ThiS-thiocarboxylate. This is a step in the synthesis of thiazole, in the thiamine biosynthesis pathway. The sulfur is donated as persulfide by IscS. In Geobacillus kaustophilus (strain HTA426), this protein is Probable tRNA sulfurtransferase.